The following is a 280-amino-acid chain: 3-methyl-2-oxobutanoate hydroxymethyltransferase (280 aa).

Residues aspartate 45 and aspartate 84 each coordinate Mg(2+). 3-methyl-2-oxobutanoate is bound by residues 45–46 (DS), aspartate 84, and lysine 114. Mg(2+) is bound at residue glutamate 116. Glutamate 183 serves as the catalytic Proton acceptor.

The protein belongs to the PanB family. As to quaternary structure, homodecamer; pentamer of dimers. Requires Mg(2+) as cofactor.

Its subcellular location is the cytoplasm. It carries out the reaction 3-methyl-2-oxobutanoate + (6R)-5,10-methylene-5,6,7,8-tetrahydrofolate + H2O = 2-dehydropantoate + (6S)-5,6,7,8-tetrahydrofolate. It participates in cofactor biosynthesis; (R)-pantothenate biosynthesis; (R)-pantoate from 3-methyl-2-oxobutanoate: step 1/2. Functionally, catalyzes the reversible reaction in which hydroxymethyl group from 5,10-methylenetetrahydrofolate is transferred onto alpha-ketoisovalerate to form ketopantoate. The protein is 3-methyl-2-oxobutanoate hydroxymethyltransferase of Clostridium kluyveri (strain ATCC 8527 / DSM 555 / NBRC 12016 / NCIMB 10680 / K1).